A 1375-amino-acid chain; its full sequence is uncharacterized protein (1375 aa).

One can recognise a Helicase ATP-binding domain in the interval 277-476; sequence LLASGDIRGG…FGLLFLLRYS (200 aa). Position 290–297 (290–297) interacts with ATP; the sequence is DEMGMGKT. The RING-type zinc-finger motif lies at 1092–1130; that stretch reads CIICRDIIKQGFITTCGHLYCSFCLEAWLKHSSSCPMCK. Residues 1190–1336 form the Helicase C-terminal domain; it reads TISKHLLYLK…QLDKLGLDVP (147 aa).

It belongs to the SNF2/RAD54 helicase family.

The protein localises to the nucleus. This is an uncharacterized protein from Schizosaccharomyces pombe (strain 972 / ATCC 24843) (Fission yeast).